The primary structure comprises 425 residues: Adenylosuccinate synthetase (425 aa).

Residues 12–18 (GDEGKGK) and 40–42 (GHT) each bind GTP. Asp-13 serves as the catalytic Proton acceptor. 2 residues coordinate Mg(2+): Asp-13 and Gly-40. IMP contacts are provided by residues 13–16 (DEGK), 38–41 (NAGH), Thr-127, Arg-141, Gln-222, Thr-237, and Arg-301. His-41 (proton donor) is an active-site residue. 297–303 (AVTGRPR) provides a ligand contact to substrate. GTP-binding positions include Arg-303, 329–331 (KID), and 411–413 (SVG).

Belongs to the adenylosuccinate synthetase family. As to quaternary structure, homodimer. Mg(2+) is required as a cofactor.

Its subcellular location is the cytoplasm. It carries out the reaction IMP + L-aspartate + GTP = N(6)-(1,2-dicarboxyethyl)-AMP + GDP + phosphate + 2 H(+). Its pathway is purine metabolism; AMP biosynthesis via de novo pathway; AMP from IMP: step 1/2. Its function is as follows. Plays an important role in the de novo pathway of purine nucleotide biosynthesis. Catalyzes the first committed step in the biosynthesis of AMP from IMP. The polypeptide is Adenylosuccinate synthetase (Fusobacterium nucleatum).